We begin with the raw amino-acid sequence, 179 residues long: MHALRSSVLALWLCLHVSVRAWMTYRSANGLDEYEPEDRIIFVGTKWCGNGNVAEGPEDLGSLKETDACCREHDMCPDLIEAGQSKHGLTNTASYTRLNCACDEKFYNCLKNSSETGSGAVRFTYFTLLGTMCYRNEHPLICVKKGWFSCSKYELDQSQPKRYQWFDVSSNFAFPRMLT.

Residues M1–A21 form the signal peptide. The propeptide occupies W22 to R39. Positions 47, 49, and 51 each coordinate Ca(2+). Intrachain disulfides connect C48–C70, C69–C109, C76–C102, C100–C133, and C142–C150. H73 is an active-site residue. D74 is a binding site for Ca(2+). The active site involves D103. N-linked (GlcNAc...) asparagine glycosylation is present at N112.

Ca(2+) is required as a cofactor. In terms of tissue distribution, expressed by the venom gland.

It localises to the secreted. The enzyme catalyses a 1,2-diacyl-sn-glycero-3-phosphocholine + H2O = a 1-acyl-sn-glycero-3-phosphocholine + a fatty acid + H(+). Functionally, PLA2 catalyzes the calcium-dependent hydrolysis of the 2-acyl groups in 3-sn-phosphoglycerides. This is Phospholipase A2 from Xylocopa appendiculata circumvolans (Japanese carpenter bee).